The chain runs to 89 residues: Signal recognition particle 19 kDa protein (89 aa).

The protein belongs to the SRP19 family. In terms of assembly, part of the signal recognition particle protein translocation system, which is composed of SRP and FtsY. Archaeal SRP consists of a 7S RNA molecule of 300 nucleotides and two protein subunits: SRP54 and SRP19.

It is found in the cytoplasm. Functionally, involved in targeting and insertion of nascent membrane proteins into the cytoplasmic membrane. Binds directly to 7S RNA and mediates binding of the 54 kDa subunit of the SRP. This chain is Signal recognition particle 19 kDa protein, found in Methanococcus maripaludis (strain C5 / ATCC BAA-1333).